Here is a 3425-residue protein sequence, read N- to C-terminus: MSNKKPGRPGSGRVVNMLKRGTSRGNPLARIKRTIDGVLRGAGPIRFVLALLTFFKFTALRPTIGMLKRWKLVGVNEATKHLKSFKRDIGQMLDGLNKRKAKRRGGSCSWIIMLLPIVAGLKLGNYNGRVLATLNKTDVSDLLVIPITAGSNGCVVRALDVGLMCQDDITYLCPKLEYGYEPEDIDCWCNETEIYIHYGRCTPSRHGRRSRRSVNVHHHGESLLEAKNTPWMDSTKATKYLTKVENWALRNPGYALAAIFIGWNLGTTRSQKIIFTIMLMLIAPAYSFSCLGMQNRDFVEGVNGVEWIDVVLEGGPCVTITAKDRPTIDVKMMNMEATELAVVRSYCYEPRVSDVTTESRCPTMGEAHNPKATYAEYICKKDFVDRGWGNGCGLFGKGSIQTCAKFDCTKKAEGRIVQKENVQFEVAVFIHGSTEASTYHNYSAQQSLKHAARFVITPKSPVYTAEMEDYGTVTLECEPRSGVDMGQFYVFTMNTKSWLVNRDWFHDLNLPWTGSSAGTWQNKESLIEFEEAHATKQSVVALASQEGALHAALAGAIPVKYSGSKLEMTSGHLKCRVKMQGLKLKGMTYPMCSNTFSLVKNPTDTGHGTVVVELSYAGTDGPCRVPISMSADLNDMTPVGRLITVNPYVSTSSTGAKIMVEVEPPFGDSFILVGSGKGQIRYQWHRSGSTIGKAFTSTLKGAQRMVALGDTAWDFGSVGGVLTSIGKGIHQVFGSAFKSLFGGMSWTTQGMLGALLLWMGLNARDRSISMTFLAVGGILVFLAVNVNADTGCSIDLARKELKCGQGMFVFNDVEAWKDNYKYYPSTPRRLAKVVAEAHEAGICGIRSVSRLEHNMWVSIKHELNAILEDNAIDLTVVVEENPGRYGKTNQRLPNVDGELMYGWKKWGKSIFSSPKMSNNTFVIDGPKTKEYPDERRAWNSMKIEDFGFGVLSTKVWMEMRTENTTDCDTAVMGTAIKGNRAVHSDLSYWIESKNNGSWKLERAVLGEVKSCTWPETHTLWSDSVVESELIIPKTLGGPKSHHNTRTGYKVQSSGPWDEKEIVIDFDYCPGTTVTVTSSCRDRGPSARTTTASGKLITDWCCRSCTAPPLRFVTKSGCWYGMEIRPTAHGDDMLIKSKVMAFQGGGMEPMQLGMLVMIVAAQEILRRRMTAPIAWSALLLLMALVLFGGITYSDLVKYVILVAAAFAESNTGGDIVHLAMVAAFNIQPGLLIGFLLRRKWSNQESRLLGVALALITVAMRDLNMSIPTLLNSGAMAWLLLRAVFEGTVSSFALPLVSLLAPGLRIVGIDVVRIGVLTLGILSLLKERSNAMAKKKGGMLLGVACATAGIASPLVFAGLHMVLKPVTRRGWPVSEALTAVGLTFALAGGIAQFDDSSMAIPLAVGGIMLVVAVVTGFSTDLWLEKASDISWSEEARVTGASQRFDVEIDQDGNMRLLNDPGVSLGVWAFRTGLILLSSYNPYFLPLTLAGYWMTTKAKQRGGVIWDVPAPKERKRAEVGNGVFRIMARGLLGKYQAGVGVMHEGVFHTMWHVTNGAVIQAGEGTLVPYWASVRNDLISYGGPWKLGKQWNGVDEVQVIVVQPGKEVINVQTQPGIFKTQYGEVGAVSLDYPTGTSGSPIIDKEGQVVGLYGNGILVGSGDFVSMITQGEKKEEEVPQVFDENMLRKRQLTVLDLHPGSGKTRKVLPMILKSAIDKRLRTAVLAPTRVVAAEIAEALKGLPIRYLTPAVKREHTGTEIIDVMCHATLTARLLTPQRVPNYNLFIMDEAHFTDPASIAARGYISTKVELGEAAAIFMTATPPGTTEAFPDSNSPITDIEEQIPDRAWNSGYEWITDFQGKTVWFVPSVKSGNEIAVCLTKAGKKVIQLNRKSFDSEYPKCKSGEWDFVITTDISEMGANFGAQRVIDSRKCIKPVIIEDGEGSVQMNGPVPITSASAAQRRGRVGRDVTQIGDEYHYSGPTSEDDHDFAHWKEAKILLDNINMPDGLVAQLYGPERDKVDAIDGEFRLRTEQRKHFVEYLRTGDLPVWISYKVAEAGISYNDRRWCFDGPLCNTVLEDNNPVELWTKSGEKKILKPRWRDGRLWADHQALKAFKDFASGKRSAIGILEVFRMLPDHFAHRMTESMDNIYMLTTAEKGSRAHREALEELPETLETFLLVFMMTVASMGVFLFFVQRRGLGKTGLGAMVMATVTVLLWIAEVPAQKIAGVLLVSLLLMIVLIPEPERQRSQTDSHLAVFMIVVLLVVGAVASNEMGWLEQTKKDLSALFGRKSDSHQETWSMPWPDLRPATAWAAYAGATTFLTPLLKHLIITEYVNFSLMAMTAQAGALFGLGKGMPFVKADLSVPLLLLGCWGQFTMTTTVSAVMMVILHYAFLVPGWQAEAMRSAQRRTAAGVMKNPVVDGIVATDVPDLEASTPITEKKLGQCVLVGIALVAVFLTPNTLTLTEFGMLTSAASVTLIEGAAGRIWNATTAVAMCHLLRKNWLAGASLAWTITRNLQAGTLRRGGGTGRTLGEAWKAQLNQLTRQEFMEYRKDGIIEVDRAAAKRARREGNVTGGHPVSRGTAKLRWLVERGFLKPRGKVVDLGCGRGGWSYYCATLKQVQEVRGYTKGGPGHEEPVMTQSYGWNIVTLKSGVNVHFKPTEPSDTLLCDIGEASPVPEIESARTIRVLQMAEEWLARGVEEFCIKVLCPYMPAVIKELERLQLKWGGGLVRVPLSRNSTHEMYWVSGSSGNVTNSINTVSQMLINRMHKTNRNGPRYEEDVDLGSGTRAVSCTRQRTDWGMVADRVKNLAREYAPSWHYDQDNPYKTWNYHGSYEVKATGSASSMVNGVVRILSKPWDTLQNVVNMAMTDTTPFGQQRVFKEKVDTKAPEPPAGTARVMNIVARWMWNFVGRNKQPRMCTKEEFIEKVNSNAALGAMFEEQHKWASAREAVEDPEFWSLVDRERELHLQGKCETCIYNMMGKREKKMGEFGKAKGSRAIWYMWLGARFLEFEALGFLNEDHWMSRENTKGGVEGLGLQKLGYVLRDISAKEGGLMYADDTAGWDTRITKADLENEAIILEKMEPMHRAVAEPLIKFAYMNKVVKVMRPGRDGKTVMDVISREDQRGSGQVVTYALNTFTNLCVQLIRCMEGEELLLPEETERLKKGKEKRIQEWLQKNGENRLSAMAVSGDDCVVKPADDRFATALHFLNSMSKVRKDTQEWKPSTGWRNWQEVPFCSHHFHELQMKDGRKIVVPCRDQDELIGRARLSPGSGWSLTETARLSKAYAQMWLLMYFHRRDLRLMANAICSSVPVSWVPTGRTTWSIHGKGEWMTSEDMLAVWNRVWIEENEHMEDKTPVTSWNEVPYLGKREDGWCGSLIGHRARSTWAENIYTPIMQIRALIGPEHYVDYMPTLNRFKPIESWSEGVL.

Residues 3–16 (NKKPGRPGSGRVVN) form an interaction with host EXOC1 region. Positions 38–73 (VLRGAGPIRFVLALLTFFKFTALRPTIGMLKRWKLV) are hydrophobic; homodimerization of capsid protein C. The propeptide at 105–120 (GGSCSWIIMLLPIVAG) is ER anchor for the capsid protein C, removed in mature form by serine protease NS3. The chain crosses the membrane as a helical span at residues 105-125 (GGSCSWIIMLLPIVAGLKLGN). The N-linked (GlcNAc...) asparagine; by host glycan is linked to N135. The next 2 helical transmembrane spans lie at 247–267 (WALR…NLGT) and 273–293 (IIFT…CLGM). 6 disulfides stabilise this stretch: C290/C317, C347/C403, C361/C392, C379/C408, C477/C575, and C592/C623. The interval 385–398 (DRGWGNGCGLFGKG) is fusion peptide. A run of 2 helical transmembrane segments spans residues 740-760 (LFGG…LWMG) and 768-788 (ISMT…NVNA). An intrachain disulfide couples C792 to C803. Residues N918, N963, and N995 are each glycosylated (N-linked (GlcNAc...) asparagine; by host). Intrachain disulfides connect C967–C1011, C1068–C1117, C1079–C1100, and C1101–C1104. 7 helical membrane-spanning segments follow: residues 1138 to 1158 (VMAF…VMIV), 1169 to 1189 (TAPI…FGGI), 1214 to 1234 (IVHL…IGFL), 1290 to 1310 (FALP…IDVV), 1337 to 1357 (MLLG…FAGL), 1369 to 1389 (WPVS…GGIA), and 1395 to 1415 (SMAI…VTGF). Residues 1421-1460 (LEKASDISWSEEARVTGASQRFDVEIDQDGNMRLLNDPGV) are interacts with and activates NS3 protease. Positions 1499–1676 (GGVIWDVPAP…EKKEEEVPQV (178 aa)) constitute a Peptidase S7 domain. Residues H1549, D1573, and S1633 each act as charge relay system; for serine protease NS3 activity in the active site. The Helicase ATP-binding domain occupies 1679-1835 (ENMLRKRQLT…DSNSPITDIE (157 aa)). The important for RNA-binding stretch occupies residues 1683 to 1686 (RKRQ). 1692–1699 (LHPGSGKT) contributes to the ATP binding site. The DEAH box motif lies at 1783 to 1786 (DEAH). The Helicase C-terminal domain occupies 1845–2011 (SGYEWITDFQ…GLVAQLYGPE (167 aa)). A regulates the ATPase activity of NS3 helicase region spans residues 2162-2166 (EELPE). 8 helical membrane passes run 2169–2189 (ETFL…LFFV), 2194–2214 (LGKT…LWIA), 2216–2236 (VPAQ…IVLI), 2252–2272 (VFMI…MGWL), 2306–2326 (AWAA…HLII), 2334–2354 (LMAM…MPFV), 2371–2391 (FTMT…AFLV), and 2441–2461 (CVLV…LTLT). One can recognise an mRNA cap 0-1 NS5-type MT domain in the interval 2521 to 2786 (GGGTGRTLGE…DVDLGSGTRA (266 aa)). S2576 is a binding site for S-adenosyl-L-methionine. The residue at position 2576 (S2576) is a Phosphoserine. The active-site For 2'-O-MTase activity is K2581. The S-adenosyl-L-methionine site is built by G2606, W2607, T2624, K2625, and V2652. D2666 acts as the For 2'-O-MTase activity in catalysis. I2667 serves as a coordination point for S-adenosyl-L-methionine. Active-site for 2'-O-MTase activity residues include K2702 and E2738. Y2740 serves as a coordination point for S-adenosyl-L-methionine. Positions 2960, 2964, 2969, and 2972 each coordinate Zn(2+). In terms of domain architecture, RdRp catalytic spans 3050 to 3202 (GLMYADDTAG…KPADDRFATA (153 aa)). Positions 3237, 3253, and 3372 each coordinate Zn(2+). Positions 3423–3425 (GVL) match the PDZ-binding motif.

It in the N-terminal section; belongs to the class I-like SAM-binding methyltransferase superfamily. mRNA cap 0-1 NS5-type methyltransferase family. As to quaternary structure, homodimer. Forms heterodimers with envelope protein E in the endoplasmic reticulum and Golgi. In terms of assembly, homodimer; in the endoplasmic reticulum and Golgi. Interacts with protein prM. Interacts with non-structural protein 1. As to quaternary structure, homodimer; Homohexamer when secreted. Interacts with envelope protein E. NS1 interacts with NS4B. Interacts with host MAVS (via C-terminus); this interaction blocks the interaction of MAVS with RIGI or IFIH1/MDA5. Interacts (via N-terminus) with serine protease NS3. In terms of assembly, forms a heterodimer with serine protease NS3. May form homooligomers. As to quaternary structure, forms a heterodimer with NS2B. Interacts with non-structural protein 2A (via N-terminus). Interacts with NS4B. Interacts with unphosphorylated RNA-directed RNA polymerase NS5; this interaction stimulates RNA-directed RNA polymerase NS5 guanylyltransferase activity. Interacts with serine protease NS3. In terms of assembly, homodimer. Specific enzymatic cleavages in vivo yield mature proteins. Cleavages in the lumen of endoplasmic reticulum are performed by host signal peptidase, whereas cleavages in the cytoplasmic side are performed by serine protease NS3. Signal cleavage at the 2K-4B site requires a prior NS3 protease-mediated cleavage at the 4A-2K site. Both NS2A and NS2B proteins are required in cis for NS2A/2B proteolytic processing. In terms of processing, cleaved in post-Golgi vesicles by a host furin, releasing the mature small envelope protein M, and peptide pr. This cleavage is incomplete as up to 30% of viral particles still carry uncleaved prM. Post-translationally, N-glycosylated. N-glycosylated. The excreted form is glycosylated and this is required for efficient secretion of the protein from infected cells. In terms of processing, phosphorylated on serines residues. This phosphorylation may trigger NS5 nuclear localization.

Its subcellular location is the virion. It is found in the host nucleus. It localises to the host cytoplasm. The protein localises to the host perinuclear region. The protein resides in the secreted. Its subcellular location is the virion membrane. It is found in the host endoplasmic reticulum membrane. The catalysed reaction is Selective hydrolysis of -Xaa-Xaa-|-Yaa- bonds in which each of the Xaa can be either Arg or Lys and Yaa can be either Ser or Ala.. The enzyme catalyses RNA(n) + a ribonucleoside 5'-triphosphate = RNA(n+1) + diphosphate. It carries out the reaction a ribonucleoside 5'-triphosphate + H2O = a ribonucleoside 5'-diphosphate + phosphate + H(+). It catalyses the reaction ATP + H2O = ADP + phosphate + H(+). The catalysed reaction is a 5'-end (5'-triphosphoguanosine)-ribonucleoside in mRNA + S-adenosyl-L-methionine = a 5'-end (N(7)-methyl 5'-triphosphoguanosine)-ribonucleoside in mRNA + S-adenosyl-L-homocysteine. The enzyme catalyses a 5'-end (N(7)-methyl 5'-triphosphoguanosine)-ribonucleoside in mRNA + S-adenosyl-L-methionine = a 5'-end (N(7)-methyl 5'-triphosphoguanosine)-(2'-O-methyl-ribonucleoside) in mRNA + S-adenosyl-L-homocysteine + H(+). Capsid protein self-assembles to form an icosahedral capsid about 40 nm in diameter. Plays a role in virus budding by binding to the cell membrane and gathering the viral RNA into a nucleocapsid that forms the core of a mature virus particle. In terms of biological role, prevents premature fusion activity of envelope proteins in trans-Golgi by binding to envelope protein E at pH6.0. After virion release in extracellular space, gets dissociated from E dimers. Its function is as follows. Acts as a chaperone for envelope protein E during intracellular virion assembly by masking and inactivating envelope protein E fusion peptide. prM is the only viral peptide matured by host furin in the trans-Golgi network probably to avoid catastrophic activation of the viral fusion activity in acidic Golgi compartment prior to virion release. prM-E cleavage is inefficient, and many virions are only partially matured. These uncleaved prM would play a role in immune evasion. Functionally, may play a role in virus budding. Exerts cytotoxic effects by activating a mitochondrial apoptotic pathway through M ectodomain. May display a viroporin activity. Binds to host cell surface receptor and mediates fusion between viral and cellular membranes. Envelope protein is synthesized in the endoplasmic reticulum in the form of heterodimer with protein prM. They play a role in virion budding in the ER, and the newly formed immature particle is covered with 60 spikes composed of heterodimer between precursor prM and envelope protein E. The virion is transported to the Golgi apparatus where the low pH causes dissociation of PrM-E heterodimers and formation of E homodimers. In terms of biological role, involved in immune evasion, pathogenesis and viral replication. Interacts with host MAVS and blocks MAVS binding to RIGI or IFIH1/MDA5, thereby leading to evasion of the innate immune response. Once cleaved off the polyprotein, is targeted to three destinations: the viral replication cycle, the plasma membrane and the extracellular compartment. Essential for viral replication. Required for formation of the replication complex and recruitment of other non-structural proteins to the ER-derived membrane structures. Excreted as a hexameric lipoparticle that plays a role against host immune response. Its function is as follows. Component of the viral RNA replication complex that functions in virion assembly. Functionally, required cofactor for the serine protease function of NS3. May have membrane-destabilizing activity and form viroporins. Displays three enzymatic activities: serine protease, NTPase and RNA helicase. NS3 serine protease, in association with NS2B, performs its autocleavage and cleaves the polyprotein at dibasic sites in the cytoplasm: C-prM, NS2A-NS2B, NS2B-NS3, NS3-NS4A, NS4A-2K and NS4B-NS5. NS3 RNA helicase binds RNA and unwinds dsRNA in the 3' to 5' direction. In terms of biological role, regulates the ATPase activity of the NS3 helicase activity. NS4A allows NS3 helicase to conserve energy during unwinding. Its function is as follows. Functions as a signal peptide for NS4B. Functionally, induces the formation of ER-derived membrane vesicles where the viral replication takes place. Replicates the viral (+) and (-) RNA genome, and performs the capping of genomes in the cytoplasm. NS5 methylates viral RNA cap at guanine N-7 and ribose 2'-O positions. In Anas (ducks), this protein is Genome polyprotein.